Reading from the N-terminus, the 201-residue chain is Glutathione peroxidase 1, mitochondrial (201 aa).

The N-terminal 27 residues, Met1–Gly27, are a transit peptide targeting the mitochondrion. Residue Sec75 is part of the active site. Sec75 is a non-standard amino acid (selenocysteine).

The protein localises to the mitochondrion. The enzyme catalyses 2 glutathione + H2O2 = glutathione disulfide + 2 H2O. May constitute a glutathione peroxidase-like protective system against oxidative stresses. Hydrogen peroxide, tert-butyl hydroperoxide and cumene, but not phosphatidylcholine hydroperoxide, can act as acceptors. This Chlamydomonas reinhardtii (Chlamydomonas smithii) protein is Glutathione peroxidase 1, mitochondrial.